Reading from the N-terminus, the 574-residue chain is Avenacosidase 1 (574 aa).

Residues 1 to 55 (MALLCSALSNSTHPSFRSHIGANSENLWHLSADPAQKSKRRCNLTLSSRAARISS) constitute a chloroplast transit peptide. A beta-D-glucoside-binding positions include Q88, H192, and 237–238 (NE). E238 serves as the catalytic Proton donor. C258 and C264 are joined by a disulfide. Residues Y381, E454, W505, 512 to 513 (EW), and F521 each bind a beta-D-glucoside. E454 serves as the catalytic Nucleophile.

The protein belongs to the glycosyl hydrolase 1 family. In terms of assembly, homo- and heteromultimer with P60B in a 1:1 stoichiometry. Aggregates to form the fibrillar stromacentre. In terms of tissue distribution, expressed in caryopses, coleoptiles, primary leaves, and etiolated and green seedlings, but not in roots.

It localises to the plastid. It is found in the chloroplast stroma. It catalyses the reaction avenacoside B + H2O = 26-desgluco-avenacoside B + D-glucose. Its activity is regulated as follows. Inhibited by N-(3-Dimethylaminopropyl)-N'-ethylcarbodiimide hydrochloride (EDC). In terms of biological role, beta-glucosidase acting as a preformed defense system. Hydrolyzes the bisdesmosides avenacosides A and B to 26-desgluco-avenacosides exhibiting fungicidal activity. Can use beta-fucoside &gt; beta-glucoside &gt; beta-galactoside &gt; beta-xyloside as substrates, but not alpha-glycosides, beta-thioglucosides and disaccharides. The chain is Avenacosidase 1 (P60A) from Avena sativa (Oat).